Reading from the N-terminus, the 584-residue chain is Arginine--tRNA ligase (584 aa).

The short motif at Pro-130–His-140 is the 'HIGH' region element.

This sequence belongs to the class-I aminoacyl-tRNA synthetase family. In terms of assembly, monomer.

Its subcellular location is the cytoplasm. It catalyses the reaction tRNA(Arg) + L-arginine + ATP = L-arginyl-tRNA(Arg) + AMP + diphosphate. In Protochlamydia amoebophila (strain UWE25), this protein is Arginine--tRNA ligase.